We begin with the raw amino-acid sequence, 132 residues long: NADH-quinone oxidoreductase subunit I 1 (132 aa).

4Fe-4S ferredoxin-type domains are found at residues 42–71 and 81–110; these read LKVS…VEAG and ERYE…MTGQ. Residues Cys51, Cys54, Cys57, Cys61, Cys90, Cys93, Cys96, and Cys100 each contribute to the [4Fe-4S] cluster site.

It belongs to the complex I 23 kDa subunit family. In terms of assembly, NDH-1 is composed of 14 different subunits. Subunits NuoA, H, J, K, L, M, N constitute the membrane sector of the complex. Requires [4Fe-4S] cluster as cofactor.

The protein localises to the cell inner membrane. The catalysed reaction is a quinone + NADH + 5 H(+)(in) = a quinol + NAD(+) + 4 H(+)(out). NDH-1 shuttles electrons from NADH, via FMN and iron-sulfur (Fe-S) centers, to quinones in the respiratory chain. The immediate electron acceptor for the enzyme in this species is believed to be ubiquinone. Couples the redox reaction to proton translocation (for every two electrons transferred, four hydrogen ions are translocated across the cytoplasmic membrane), and thus conserves the redox energy in a proton gradient. This is NADH-quinone oxidoreductase subunit I 1 from Geobacter sulfurreducens (strain ATCC 51573 / DSM 12127 / PCA).